The sequence spans 195 residues: UPF0215 protein TK2033 (195 aa).

It belongs to the UPF0215 family.

The protein is UPF0215 protein TK2033 of Thermococcus kodakarensis (strain ATCC BAA-918 / JCM 12380 / KOD1) (Pyrococcus kodakaraensis (strain KOD1)).